We begin with the raw amino-acid sequence, 440 residues long: Glutamyl-tRNA reductase (440 aa).

Residues 50–53, Ser109, 114–116, and Gln120 each bind substrate; these read TCNR and EPQ. The active-site Nucleophile is the Cys51. 189-194 contacts NADP(+); that stretch reads GAGEMA.

The protein belongs to the glutamyl-tRNA reductase family. Homodimer.

The catalysed reaction is (S)-4-amino-5-oxopentanoate + tRNA(Glu) + NADP(+) = L-glutamyl-tRNA(Glu) + NADPH + H(+). It functions in the pathway porphyrin-containing compound metabolism; protoporphyrin-IX biosynthesis; 5-aminolevulinate from L-glutamyl-tRNA(Glu): step 1/2. Functionally, catalyzes the NADPH-dependent reduction of glutamyl-tRNA(Glu) to glutamate 1-semialdehyde (GSA). This is Glutamyl-tRNA reductase from Nitratidesulfovibrio vulgaris (strain ATCC 29579 / DSM 644 / CCUG 34227 / NCIMB 8303 / VKM B-1760 / Hildenborough) (Desulfovibrio vulgaris).